A 93-amino-acid chain; its full sequence is DNA-binding protein Fis (93 aa).

Residues 74 to 93 (QTRAALMMGINRGTLRKKLK) constitute a DNA-binding region (H-T-H motif).

This sequence belongs to the transcriptional regulatory Fis family. In terms of assembly, homodimer.

Its function is as follows. Activates ribosomal RNA transcription. Plays a direct role in upstream activation of rRNA promoters. This is DNA-binding protein Fis from Klebsiella pneumoniae.